Reading from the N-terminus, the 552-residue chain is Chaperonin GroEL (552 aa).

ATP is bound by residues 30–33 (TLGP), Lys-51, 87–91 (DGTTT), Gly-415, and Asp-499.

Belongs to the chaperonin (HSP60) family. As to quaternary structure, forms a cylinder of 14 subunits composed of two heptameric rings stacked back-to-back. Interacts with the co-chaperonin GroES.

It localises to the cytoplasm. It catalyses the reaction ATP + H2O + a folded polypeptide = ADP + phosphate + an unfolded polypeptide.. Together with its co-chaperonin GroES, plays an essential role in assisting protein folding. The GroEL-GroES system forms a nano-cage that allows encapsulation of the non-native substrate proteins and provides a physical environment optimized to promote and accelerate protein folding. In Hamiltonella defensa subsp. Acyrthosiphon pisum (strain 5AT), this protein is Chaperonin GroEL.